A 206-amino-acid polypeptide reads, in one-letter code: ATP phosphoribosyltransferase (206 aa).

The protein belongs to the ATP phosphoribosyltransferase family. Short subfamily. As to quaternary structure, heteromultimer composed of HisG and HisZ subunits.

Its subcellular location is the cytoplasm. The enzyme catalyses 1-(5-phospho-beta-D-ribosyl)-ATP + diphosphate = 5-phospho-alpha-D-ribose 1-diphosphate + ATP. It participates in amino-acid biosynthesis; L-histidine biosynthesis; L-histidine from 5-phospho-alpha-D-ribose 1-diphosphate: step 1/9. Its function is as follows. Catalyzes the condensation of ATP and 5-phosphoribose 1-diphosphate to form N'-(5'-phosphoribosyl)-ATP (PR-ATP). Has a crucial role in the pathway because the rate of histidine biosynthesis seems to be controlled primarily by regulation of HisG enzymatic activity. This Leptospira interrogans serogroup Icterohaemorrhagiae serovar copenhageni (strain Fiocruz L1-130) protein is ATP phosphoribosyltransferase.